A 342-amino-acid polypeptide reads, in one-letter code: N-acetyl-gamma-glutamyl-phosphate reductase (342 aa).

Residue Cys149 is part of the active site.

This sequence belongs to the NAGSA dehydrogenase family. Type 1 subfamily.

It is found in the cytoplasm. It catalyses the reaction N-acetyl-L-glutamate 5-semialdehyde + phosphate + NADP(+) = N-acetyl-L-glutamyl 5-phosphate + NADPH + H(+). It functions in the pathway amino-acid biosynthesis; L-arginine biosynthesis; N(2)-acetyl-L-ornithine from L-glutamate: step 3/4. Functionally, catalyzes the NADPH-dependent reduction of N-acetyl-5-glutamyl phosphate to yield N-acetyl-L-glutamate 5-semialdehyde. The protein is N-acetyl-gamma-glutamyl-phosphate reductase of Aromatoleum aromaticum (strain DSM 19018 / LMG 30748 / EbN1) (Azoarcus sp. (strain EbN1)).